The following is a 364-amino-acid chain: 3-dehydroquinate synthase (364 aa).

Residues 73 to 78 (DGEQNK), 107 to 111 (GVIGD), 131 to 132 (TT), Lys-144, Lys-153, and 171 to 174 (CLCT) each bind NAD(+). The Zn(2+) site is built by Glu-186, His-249, and His-266.

Belongs to the sugar phosphate cyclases superfamily. Dehydroquinate synthase family. NAD(+) serves as cofactor. Co(2+) is required as a cofactor. The cofactor is Zn(2+).

The protein localises to the cytoplasm. It catalyses the reaction 7-phospho-2-dehydro-3-deoxy-D-arabino-heptonate = 3-dehydroquinate + phosphate. Its pathway is metabolic intermediate biosynthesis; chorismate biosynthesis; chorismate from D-erythrose 4-phosphate and phosphoenolpyruvate: step 2/7. Catalyzes the conversion of 3-deoxy-D-arabino-heptulosonate 7-phosphate (DAHP) to dehydroquinate (DHQ). The protein is 3-dehydroquinate synthase of Blochmanniella floridana.